A 121-amino-acid polypeptide reads, in one-letter code: Large ribosomal subunit protein uL14c (121 aa).

The protein belongs to the universal ribosomal protein uL14 family. As to quaternary structure, part of the 50S ribosomal subunit.

The protein localises to the plastid. It localises to the chloroplast. Binds to 23S rRNA. This is Large ribosomal subunit protein uL14c from Pelargonium hortorum (Common geranium).